The following is a 430-amino-acid chain: Gamma-glutamyl phosphate reductase (430 aa).

It belongs to the gamma-glutamyl phosphate reductase family.

It is found in the cytoplasm. It catalyses the reaction L-glutamate 5-semialdehyde + phosphate + NADP(+) = L-glutamyl 5-phosphate + NADPH + H(+). Its pathway is amino-acid biosynthesis; L-proline biosynthesis; L-glutamate 5-semialdehyde from L-glutamate: step 2/2. Functionally, catalyzes the NADPH-dependent reduction of L-glutamate 5-phosphate into L-glutamate 5-semialdehyde and phosphate. The product spontaneously undergoes cyclization to form 1-pyrroline-5-carboxylate. This is Gamma-glutamyl phosphate reductase from Polaromonas naphthalenivorans (strain CJ2).